The sequence spans 125 residues: uncharacterized protein (125 aa).

3 helical membrane-spanning segments follow: residues 20-42, 57-76, and 81-103; these read RNGGGTLVVAFAFTAFFSLLTIL, LMNAFVLGTITATFAKGVVV, and YLFVASLLAAAFSVLMILVYMAS.

Its subcellular location is the cell membrane. This is an uncharacterized protein from Archaeoglobus fulgidus (strain ATCC 49558 / DSM 4304 / JCM 9628 / NBRC 100126 / VC-16).